The chain runs to 187 residues: TATA-box-binding protein (187 aa).

2 consecutive repeat copies span residues I10–L86 and V101–L179.

Belongs to the TBP family.

Functionally, general factor that plays a role in the activation of archaeal genes transcribed by RNA polymerase. Binds specifically to the TATA box promoter element which lies close to the position of transcription initiation. This Natronomonas pharaonis (strain ATCC 35678 / DSM 2160 / CIP 103997 / JCM 8858 / NBRC 14720 / NCIMB 2260 / Gabara) (Halobacterium pharaonis) protein is TATA-box-binding protein.